A 372-amino-acid polypeptide reads, in one-letter code: Glutamate 5-kinase (372 aa).

Lys-14 serves as a coordination point for ATP. Substrate contacts are provided by Ser-54, Asp-141, and Asn-153. 173 to 174 (TD) provides a ligand contact to ATP. The region spanning 280–358 (RGTLVLDAGA…DAIESLLGYS (79 aa)) is the PUA domain.

Belongs to the glutamate 5-kinase family.

The protein resides in the cytoplasm. It catalyses the reaction L-glutamate + ATP = L-glutamyl 5-phosphate + ADP. It functions in the pathway amino-acid biosynthesis; L-proline biosynthesis; L-glutamate 5-semialdehyde from L-glutamate: step 1/2. Its function is as follows. Catalyzes the transfer of a phosphate group to glutamate to form L-glutamate 5-phosphate. The polypeptide is Glutamate 5-kinase (Pseudomonas putida (strain W619)).